Reading from the N-terminus, the 210-residue chain is 3-hydroxy-3-methylglutaryl-coenzyme A reductase 2 (210 aa).

Residues Lys-21 and Asp-97 each act as charge relay system in the active site. The helical transmembrane segment at 166–186 (LLATIVAGSVLAGELSLMSAI) threads the bilayer. The active-site Proton donor is the His-195. A glycan (N-linked (GlcNAc...) asparagine) is linked at Asn-199.

Belongs to the HMG-CoA reductase family.

The protein localises to the endoplasmic reticulum membrane. The protein resides in the mitochondrion membrane. It is found in the plastid membrane. The enzyme catalyses (R)-mevalonate + 2 NADP(+) + CoA = (3S)-3-hydroxy-3-methylglutaryl-CoA + 2 NADPH + 2 H(+). It functions in the pathway metabolic intermediate biosynthesis; (R)-mevalonate biosynthesis; (R)-mevalonate from acetyl-CoA: step 3/3. Catalyzes the synthesis of mevalonate. The specific precursor of all isoprenoid compounds present in plants. The polypeptide is 3-hydroxy-3-methylglutaryl-coenzyme A reductase 2 (HMGR2) (Hevea brasiliensis (Para rubber tree)).